The chain runs to 672 residues: APC membrane recruitment protein 2 (672 aa).

A compositionally biased stretch (gly residues) spans 1–21; it reads METGRSRGGGAAVSERGGGAR. Disordered stretches follow at residues 1-23, 74-360, and 443-560; these read METGRSRGGGAAVSERGGGARAG, TMPS…DPSA, and MLSQ…DALC. Over residues 142–158 the composition is skewed to low complexity; that stretch reads GSLASSSVAKSHSFFSL. Position 154 is a phosphoserine (serine 154). Composition is skewed to basic and acidic residues over residues 163–175 and 201–210; these read GRSETGKGDHAEA and RGKEEEEKAV. A phosphoserine mark is found at serine 223, serine 227, and serine 244. Residues 230–254 are compositionally biased toward basic and acidic residues; it reads CVKEEPPRAARRPDSPGQDASRHAA. Over residues 255–269 the composition is skewed to low complexity; the sequence is GEPAGGEQAPASAES. Serine 284 carries the post-translational modification Phosphoserine. Residues 289–303 are compositionally biased toward basic and acidic residues; the sequence is SRGEDAEGHRREEKP. Residues 343-354 show a composition bias toward low complexity; that stretch reads ASAVPDPSSVDP. 2 positions are modified to phosphoserine: serine 356 and serine 359. Residues 446–457 are compositionally biased toward low complexity; sequence QTEDQGQGTQEG. Composition is skewed to basic and acidic residues over residues 478-488 and 502-516; these read RCGEAAKDMSS and QQKEEPKHPEKEHQE.

It belongs to the Amer family. As to quaternary structure, interacts with APC.

It is found in the cell membrane. In terms of biological role, negative regulator of the canonical Wnt signaling pathway involved in neuroectodermal patterning. Acts by specifically binding phosphatidylinositol 4,5-bisphosphate (PtdIns(4,5)P2), translocating to the cell membrane and interacting with key regulators of the canonical Wnt signaling pathway, such as components of the beta-catenin destruction complex. The polypeptide is APC membrane recruitment protein 2 (Amer2) (Mus musculus (Mouse)).